Consider the following 134-residue polypeptide: NADPH-dependent 7-cyano-7-deazaguanine reductase (134 aa).

C48 serves as the catalytic Thioimide intermediate. The active-site Proton donor is D55. Substrate contacts are provided by residues 70–72 (VEL) and 89–90 (QE).

Belongs to the GTP cyclohydrolase I family. QueF type 1 subfamily.

The protein localises to the cytoplasm. It carries out the reaction 7-aminomethyl-7-carbaguanine + 2 NADP(+) = 7-cyano-7-deazaguanine + 2 NADPH + 3 H(+). It functions in the pathway tRNA modification; tRNA-queuosine biosynthesis. Its function is as follows. Catalyzes the NADPH-dependent reduction of 7-cyano-7-deazaguanine (preQ0) to 7-aminomethyl-7-deazaguanine (preQ1). In Caldanaerobacter subterraneus subsp. tengcongensis (strain DSM 15242 / JCM 11007 / NBRC 100824 / MB4) (Thermoanaerobacter tengcongensis), this protein is NADPH-dependent 7-cyano-7-deazaguanine reductase.